A 286-amino-acid chain; its full sequence is Structure-specific endonuclease subunit SLX1 (286 aa).

In terms of domain architecture, GIY-YIG spans 15–98 (SFYGVYILKS…QHAYQTRHIN (84 aa)).

Belongs to the SLX1 family. In terms of assembly, forms a heterodimer with SLX4. Requires a divalent metal cation as cofactor.

It localises to the nucleus. Functionally, catalytic subunit of the SLX1-SLX4 structure-specific endonuclease that resolves DNA secondary structures generated during DNA repair and recombination. Has endonuclease activity towards branched DNA substrates, introducing single-strand cuts in duplex DNA close to junctions with ss-DNA. In Candida dubliniensis (strain CD36 / ATCC MYA-646 / CBS 7987 / NCPF 3949 / NRRL Y-17841) (Yeast), this protein is Structure-specific endonuclease subunit SLX1.